A 269-amino-acid polypeptide reads, in one-letter code: Regulatory protein RecX (269 aa).

It belongs to the RecX family.

It is found in the cytoplasm. Modulates RecA activity. This Geobacillus kaustophilus (strain HTA426) protein is Regulatory protein RecX.